A 130-amino-acid polypeptide reads, in one-letter code: D-ribose pyranase (130 aa).

Catalysis depends on histidine 20, which acts as the Proton donor. Residues aspartate 28, histidine 97, and tyrosine 119–asparagine 121 contribute to the substrate site.

The protein belongs to the RbsD / FucU family. RbsD subfamily. As to quaternary structure, homodecamer.

It localises to the cytoplasm. The catalysed reaction is beta-D-ribopyranose = beta-D-ribofuranose. The protein operates within carbohydrate metabolism; D-ribose degradation; D-ribose 5-phosphate from beta-D-ribopyranose: step 1/2. Functionally, catalyzes the interconversion of beta-pyran and beta-furan forms of D-ribose. In Heliobacterium modesticaldum (strain ATCC 51547 / Ice1), this protein is D-ribose pyranase.